The following is a 326-amino-acid chain: Vitamin B12 import system permease protein BtuC (326 aa).

Topologically, residues 1 to 10 (MLTLARQQQR) are cytoplasmic. The helical transmembrane segment at 11–35 (QNIRWLLCLSVLMLLALLLSLCAGE) threads the bilayer. Over 36–56 (QWISPGDWFSPRGELFVWQIR) the chain is Periplasmic. The helical transmembrane segment at 57–81 (LPRTLAVLLVGAALAISGAVMQALF) threads the bilayer. Residues 82-92 (ENPLAEPGLLG) lie on the Cytoplasmic side of the membrane. Residues 93-107 (VSNGAGVGLIAAVLL) traverse the membrane as a helical segment. Residues 108 to 113 (GQGQLP) lie on the Periplasmic side of the membrane. The helical transmembrane segment at 114–138 (NWALGLCAIAGALIITLILLRFARR) threads the bilayer. Residues 139–141 (HLS) lie on the Cytoplasmic side of the membrane. Residues 142-166 (TSRLLLAGVALGIICSALMTWAIYF) form a helical membrane-spanning segment. Residues 167-190 (STSVDLRQLMYWMMGGFGGVDWRQ) lie on the Periplasmic side of the membrane. The chain crosses the membrane as a helical span at residues 191 to 206 (SWLMLALIPMLLWICC). Over 207–228 (QSRPMNMLALGEISARQLGLPL) the chain is Cytoplasmic. Residues 229–249 (WFWRNVLVAATGWMVGVSVAL) form a helical membrane-spanning segment. The Periplasmic segment spans residues 250–257 (AGAIGFIG). Residues 258 to 267 (LVIPHILRLC) form a helical membrane-spanning segment. The Cytoplasmic segment spans residues 268–274 (GLTDHRA). A helical transmembrane segment spans residues 275 to 296 (LLPGCALAGASALLLADIVARL). Over 297 to 304 (ALAAAELP) the chain is Periplasmic. A helical transmembrane segment spans residues 305–324 (IGVVTATLGAPVFIWLLLKA). At 325-326 (GR) the chain is on the cytoplasmic side.

The protein belongs to the binding-protein-dependent transport system permease family. FecCD subfamily. In terms of assembly, the complex is composed of two ATP-binding proteins (BtuD), two transmembrane proteins (BtuC) and a solute-binding protein (BtuF).

The protein localises to the cell inner membrane. Functionally, part of the ABC transporter complex BtuCDF involved in vitamin B12 import. Involved in the translocation of the substrate across the membrane. The protein is Vitamin B12 import system permease protein BtuC (btuC) of Escherichia coli O157:H7.